Consider the following 103-residue polypeptide: UPF0145 protein BCE_5284 (103 aa).

This sequence belongs to the UPF0145 family.

This is UPF0145 protein BCE_5284 from Bacillus cereus (strain ATCC 10987 / NRS 248).